We begin with the raw amino-acid sequence, 316 residues long: Fe-S cluster assembly protein DRE2 (316 aa).

Positions 7 to 139 (VSPPKRTLLL…PDYGDNEGAV (133 aa)) are N-terminal SAM-like domain. Residues 140-208 (TLKFGLKKKN…EDTLMTEEDL (69 aa)) are linker. Residues Cys218, Cys229, Cys232, and Cys234 each coordinate [2Fe-2S] cluster. The segment at 218-234 (CQPKAGKRRRACKDCSC) is fe-S binding site A. Cys279, Cys282, Cys290, and Cys293 together coordinate [4Fe-4S] cluster. 2 consecutive short sequence motifs (cx2C motif) follow at residues 279–282 (CGNC) and 290–293 (CDGC). Residues 279–293 (CGNCSLGDAFRCDGC) form a fe-S binding site B region.

Belongs to the anamorsin family. In terms of assembly, monomer. Interacts with TAH18. Interacts with MIA40. Requires [2Fe-2S] cluster as cofactor. The cofactor is [4Fe-4S] cluster.

Its subcellular location is the cytoplasm. It localises to the mitochondrion intermembrane space. In terms of biological role, component of the cytosolic iron-sulfur (Fe-S) protein assembly (CIA) machinery required for the maturation of extramitochondrial Fe-S proteins. Part of an electron transfer chain functioning in an early step of cytosolic Fe-S biogenesis, facilitating the de novo assembly of a [4Fe-4S] cluster on the scaffold complex CFD1-NBP35. Electrons are transferred to DRE2 from NADPH via the FAD- and FMN-containing protein TAH18. TAH18-DRE2 are also required for the assembly of the diferric tyrosyl radical cofactor of ribonucleotide reductase (RNR), probably by providing electrons for reduction during radical cofactor maturation in the catalytic small subunit RNR2. The sequence is that of Fe-S cluster assembly protein DRE2 from Fusarium vanettenii (strain ATCC MYA-4622 / CBS 123669 / FGSC 9596 / NRRL 45880 / 77-13-4) (Fusarium solani subsp. pisi).